The sequence spans 655 residues: Macrolide export ATP-binding/permease protein MacB (655 aa).

Residues 6-244 (IELRDVWREF…DALAGDEGPE (239 aa)) enclose the ABC transporter domain. 42–49 (GASGSGKS) contributes to the ATP binding site. The segment at 225–252 (DQARPDAPPLDALAGDEGPEAPRPAPQP) is disordered. A run of 4 helical transmembrane segments spans residues 280-300 (LTML…ALGA), 527-547 (LTLL…IGVM), 583-603 (VLVC…IGVL), and 620-640 (SMVL…FLPA).

This sequence belongs to the ABC transporter superfamily. Macrolide exporter (TC 3.A.1.122) family. In terms of assembly, homodimer.

The protein localises to the cell inner membrane. Its function is as follows. Non-canonical ABC transporter that contains transmembrane domains (TMD), which form a pore in the inner membrane, and an ATP-binding domain (NBD), which is responsible for energy generation. Confers resistance against macrolides. In Bordetella avium (strain 197N), this protein is Macrolide export ATP-binding/permease protein MacB.